A 291-amino-acid chain; its full sequence is D-alanyl-D-alanine carboxypeptidase DacB2 (291 aa).

An N-terminal signal peptide occupies residues 1-22; that stretch reads MRKLMTATAALCACAVTVSAGA. The Acyl-ester intermediate role is filled by S69. The active-site Proton acceptor is K72. S124 is an active-site residue.

Belongs to the peptidase S11 family.

The protein localises to the periplasm. It participates in cell wall biogenesis; peptidoglycan biosynthesis. Its activity is regulated as follows. Inhibited by the beta-lactam antibiotic meropenem. Inhibited by the non-specific inhibitor phenylmethylsulfonyl fluoride (PMSF). Its function is as follows. Probably cleaves the terminal D-Ala-D-Ala dipeptide of the peptidoglycan stem peptide. Shows significant D,D-carboxypeptidase activity in vitro. Acts on the synthetic penta-peptide substrate Penta-DAP (L-Ala-gamma-D-Gln-DAP-D-Ala-D-Ala). Also shows weak activity on Penta-Lys (L-Ala-gamma-Glu-L-Lys-D-Ala-D-Ala). The catalytic domain binds weakly to peptidoglycan in vitro. Plays an important role in the maintenance of colony morphology and cell wall permeability and integrity. This chain is D-alanyl-D-alanine carboxypeptidase DacB2, found in Mycobacterium tuberculosis (strain ATCC 25618 / H37Rv).